Reading from the N-terminus, the 122-residue chain is NADH-quinone oxidoreductase subunit A (122 aa).

The next 3 membrane-spanning stretches (helical) occupy residues 10–30 (LIVF…LTIG), 67–87 (FALL…WAVV), and 91–111 (LGLF…IGLI).

It belongs to the complex I subunit 3 family. NDH-1 is composed of 14 different subunits. Subunits NuoA, H, J, K, L, M, N constitute the membrane sector of the complex.

Its subcellular location is the cell membrane. The enzyme catalyses a quinone + NADH + 5 H(+)(in) = a quinol + NAD(+) + 4 H(+)(out). Functionally, NDH-1 shuttles electrons from NADH, via FMN and iron-sulfur (Fe-S) centers, to quinones in the respiratory chain. The immediate electron acceptor for the enzyme in this species is believed to be a menaquinone. Couples the redox reaction to proton translocation (for every two electrons transferred, four hydrogen ions are translocated across the cytoplasmic membrane), and thus conserves the redox energy in a proton gradient. In Geobacillus thermodenitrificans (strain NG80-2), this protein is NADH-quinone oxidoreductase subunit A.